A 211-amino-acid polypeptide reads, in one-letter code: 5-formyltetrahydrofolate cyclo-ligase (211 aa).

Residue 4–8 (KQLLR) coordinates ATP. Substrate is bound by residues Glu-56 and 152 to 156 (HGAGY). ATP contacts are provided by residues 151–158 (GHGAGYYD) and Asp-194.

This sequence belongs to the 5-formyltetrahydrofolate cyclo-ligase family. N-glycosylated.

The protein resides in the mitochondrion. The catalysed reaction is (6S)-5-formyl-5,6,7,8-tetrahydrofolate + ATP = (6R)-5,10-methenyltetrahydrofolate + ADP + phosphate. In terms of biological role, only enzyme known to utilize 5-formyltetrahydrofolate (folinic acid) as substrate. Contributes to tetrahydrofolate metabolism in an alternative way of folate biosynthesis. May regulate carbon flow through the folate-dependent one-carbon metabolic network that supplies carbon for the biosynthesis of purines, thymidine and amino acids. The polypeptide is 5-formyltetrahydrofolate cyclo-ligase (FAU1) (Saccharomyces cerevisiae (strain ATCC 204508 / S288c) (Baker's yeast)).